The chain runs to 188 residues: NANOG neighbor homeobox (188 aa).

A disordered region spans residues 28 to 106 (ETILANKKQS…NEKQKQYPEK (79 aa)). The segment covering 57–106 (QNGKQKWREEGEAGRKREREKEEKNEKELQDEQENKRKRENEKQKQYPEK) has biased composition (basic and acidic residues). Positions 102 to 161 (QYPEKRLVSKSLMHTLWAKFKLNRCPTIQESLSLSFEFDMTHKQISQWFCKTRKKYNKEM) form a DNA-binding region, homeobox.

The protein resides in the nucleus. This Homo sapiens (Human) protein is NANOG neighbor homeobox (NANOGNB).